A 216-amino-acid chain; its full sequence is Somatotropin (216 aa).

Positions 1–26 are cleaved as a signal peptide; that stretch reads MATDSRTSWLLTVSLLCLLWPQEASA. H45 contributes to the Zn(2+) binding site. A disulfide bond links C78 and C189. S131 bears the Phosphoserine mark. E198 lines the Zn(2+) pocket. Residues C206 and C214 are joined by a disulfide bond.

This sequence belongs to the somatotropin/prolactin family.

The protein resides in the secreted. Functionally, plays an important role in growth control. Its major role in stimulating body growth is to stimulate the liver and other tissues to secrete IGF1. It stimulates both the differentiation and proliferation of myoblasts. It also stimulates amino acid uptake and protein synthesis in muscle and other tissues. This Mus musculus (Mouse) protein is Somatotropin (Gh1).